The following is a 945-amino-acid chain: MSNKKADSKPQAKYPVNLLDTPFPMRGDLPKREPQWVKEWEARGIYEKIRAASQGRPKFILHDGPPYANGDIHLGHAVNKILKDIVVKSRNMAGFDAPYVPGWDCHGMPIEIQIEKQFGKSLPAAEVMSKARAYATEQIEKQKVGFKRLGVLGDWANPYKTMNFVNEAEEIRALGKIIEKGYVYRGLKPVNWCFDCGSALAEAEVEYKDRTDPTIDVMFAFAEPEKTAHAFGLPALPRAEGGIVIWTTTPWTIPANQALNLHPEIIYALVDTERGLLIIAEERVEACMTDFKLTGRVVATAPGVKLANLRFHHPLASAHPGYKRTAPVYLGDYVTTDTGTGVVHSSPAYGIEDFMSCKAHGMTDSDFINPVMGDGRYIESLPLFGGLSIWDANPKIVDALNAAGSLLRSEKYTHSYMHCWRHKTPIIYRATSQWFAGMDVTPQDGGKTLRETALEGVDATAFYPSWGKQRLFSMIANRPDWTLSRQRQWGVPMAFFVHKETGELHPRTLELLEEVAKRVEQSGIEAWQSLDPRELIGDDANLYEKNRDTLDVWFDSGTTHWHVLRGSHKDQLQFPADLYLEGSDQHRGWFHSSLLTASMIDGRAPYKGLLTHGFTVDGEGRKMSKSLGNGIDPHEVANRLGAEIIRLWIASTDYSGELAISEEILKRVTEGYRRIRNTLRFLLANLSDFDFAQHAVPVDEWLEIDRYAVAFSQQLQTELLGHYEKYEFHPVVAKLQTYCSEDLGGFYLDVLKDRLYTSAADSRARRSAQTALYHLTHGLLRVLAPFLSFTAEEAWKVFQPASDTIFTETYYAYPEVAGSAALIEKWALLRDVRGSVTKALEEARTANRIGSSLQAEVAVHASGARYDALTSLGDDLKFVLITSAATVVKVDDEAQESVDVAASKYQKCERCWHYREDVGAHAEHPTLCGRCFSNLFENGEIRSAA.

Positions 66 to 76 (PYANGDIHLGH) match the 'HIGH' region motif. Glutamate 581 is a binding site for L-isoleucyl-5'-AMP. The 'KMSKS' region signature appears at 622–626 (KMSKS). Lysine 625 provides a ligand contact to ATP. The Zn(2+) site is built by cysteine 908, cysteine 911, cysteine 928, and cysteine 931.

It belongs to the class-I aminoacyl-tRNA synthetase family. IleS type 1 subfamily. In terms of assembly, monomer. The cofactor is Zn(2+).

The protein resides in the cytoplasm. It catalyses the reaction tRNA(Ile) + L-isoleucine + ATP = L-isoleucyl-tRNA(Ile) + AMP + diphosphate. Its function is as follows. Catalyzes the attachment of isoleucine to tRNA(Ile). As IleRS can inadvertently accommodate and process structurally similar amino acids such as valine, to avoid such errors it has two additional distinct tRNA(Ile)-dependent editing activities. One activity is designated as 'pretransfer' editing and involves the hydrolysis of activated Val-AMP. The other activity is designated 'posttransfer' editing and involves deacylation of mischarged Val-tRNA(Ile). This chain is Isoleucine--tRNA ligase, found in Burkholderia cenocepacia (strain HI2424).